The primary structure comprises 312 residues: Ribosomal RNA small subunit methyltransferase H (312 aa).

Residues 35–37, aspartate 55, phenylalanine 79, aspartate 101, and glutamine 108 contribute to the S-adenosyl-L-methionine site; that span reads GGH.

This sequence belongs to the methyltransferase superfamily. RsmH family.

It localises to the cytoplasm. It catalyses the reaction cytidine(1402) in 16S rRNA + S-adenosyl-L-methionine = N(4)-methylcytidine(1402) in 16S rRNA + S-adenosyl-L-homocysteine + H(+). Functionally, specifically methylates the N4 position of cytidine in position 1402 (C1402) of 16S rRNA. This chain is Ribosomal RNA small subunit methyltransferase H, found in Buchnera aphidicola subsp. Schizaphis graminum (strain Sg).